The sequence spans 154 residues: Ribosome maturation factor RimP (154 aa).

The protein belongs to the RimP family.

Its subcellular location is the cytoplasm. Required for maturation of 30S ribosomal subunits. The polypeptide is Ribosome maturation factor RimP (Desulforudis audaxviator (strain MP104C)).